The sequence spans 374 residues: Probable trehalose-phosphate phosphatase 9 (374 aa).

The protein belongs to the trehalose phosphatase family. The cofactor is a divalent metal cation.

The enzyme catalyses alpha,alpha-trehalose 6-phosphate + H2O = alpha,alpha-trehalose + phosphate. It participates in glycan biosynthesis; trehalose biosynthesis. Removes the phosphate from trehalose 6-phosphate to produce free trehalose. Trehalose accumulation in plant may improve abiotic stress tolerance. In Oryza sativa subsp. japonica (Rice), this protein is Probable trehalose-phosphate phosphatase 9 (TPP9).